A 228-amino-acid chain; its full sequence is MDIRPLEEHLGISFQQKALLKEAFTHSSYVNEHRKQRLSDNERLEFLGDAVLELAVSQYLYRNNKDMPEGEMTKLRAAIVCEPSLKNFAEELEFGKFLRLGKGEQQTGGRERPAILADAFEAFLGALYLDQGFDNVLDFLNIHVFPKLTTGAFSHAMDYKSQLQEFVQQHKDQKIEYRIIEEKGPSHNKEFVAEVVIQEKAAGIGTGRTKKEAEQRAAKNALDSINNS.

Residues 3–132 (IRPLEEHLGI…FLGALYLDQG (130 aa)) enclose the RNase III domain. Residue Glu-45 coordinates Mg(2+). Residue Asp-49 is part of the active site. Mg(2+) contacts are provided by Asp-118 and Glu-121. Residue Glu-121 is part of the active site. Residues 158-227 (DYKSQLQEFV…AKNALDSINN (70 aa)) enclose the DRBM domain. Residues 205–228 (GTGRTKKEAEQRAAKNALDSINNS) form a disordered region.

Belongs to the ribonuclease III family. In terms of assembly, homodimer. Mg(2+) is required as a cofactor.

The protein resides in the cytoplasm. The enzyme catalyses Endonucleolytic cleavage to 5'-phosphomonoester.. In terms of biological role, digests double-stranded RNA. Involved in the processing of primary rRNA transcript to yield the immediate precursors to the large and small rRNAs (23S and 16S). Processes some mRNAs, and tRNAs when they are encoded in the rRNA operon. Processes pre-crRNA and tracrRNA of type II CRISPR loci if present in the organism. The polypeptide is Ribonuclease 3 (Oceanobacillus iheyensis (strain DSM 14371 / CIP 107618 / JCM 11309 / KCTC 3954 / HTE831)).